Here is a 292-residue protein sequence, read N- to C-terminus: NAD kinase (292 aa).

Asp-73 acts as the Proton acceptor in catalysis. NAD(+) contacts are provided by residues 73-74 (DG), 147-148 (NE), His-158, Arg-175, Asp-177, 188-193 (TAYSLS), and Gln-247.

It belongs to the NAD kinase family. It depends on a divalent metal cation as a cofactor.

It localises to the cytoplasm. It carries out the reaction NAD(+) + ATP = ADP + NADP(+) + H(+). Functionally, involved in the regulation of the intracellular balance of NAD and NADP, and is a key enzyme in the biosynthesis of NADP. Catalyzes specifically the phosphorylation on 2'-hydroxyl of the adenosine moiety of NAD to yield NADP. The chain is NAD kinase from Escherichia coli O157:H7.